We begin with the raw amino-acid sequence, 301 residues long: Probable alpha-L-glutamate ligase (301 aa).

Residues leucine 104–glutamate 287 form the ATP-grasp domain. ATP contacts are provided by residues lysine 141, glutamate 178 to tyrosine 179, aspartate 187, and arginine 211 to asparagine 213. Mg(2+)-binding residues include aspartate 248, glutamate 260, and asparagine 262. Positions 248, 260, and 262 each coordinate Mn(2+).

It belongs to the RimK family. Requires Mg(2+) as cofactor. Mn(2+) serves as cofactor.

The protein is Probable alpha-L-glutamate ligase of Pseudomonas aeruginosa (strain UCBPP-PA14).